A 213-amino-acid polypeptide reads, in one-letter code: ATP phosphoribosyltransferase (213 aa).

Belongs to the ATP phosphoribosyltransferase family. Short subfamily. Heteromultimer composed of HisG and HisZ subunits.

The protein localises to the cytoplasm. It carries out the reaction 1-(5-phospho-beta-D-ribosyl)-ATP + diphosphate = 5-phospho-alpha-D-ribose 1-diphosphate + ATP. It participates in amino-acid biosynthesis; L-histidine biosynthesis; L-histidine from 5-phospho-alpha-D-ribose 1-diphosphate: step 1/9. Its function is as follows. Catalyzes the condensation of ATP and 5-phosphoribose 1-diphosphate to form N'-(5'-phosphoribosyl)-ATP (PR-ATP). Has a crucial role in the pathway because the rate of histidine biosynthesis seems to be controlled primarily by regulation of HisG enzymatic activity. The sequence is that of ATP phosphoribosyltransferase from Thermoanaerobacter pseudethanolicus (strain ATCC 33223 / 39E) (Clostridium thermohydrosulfuricum).